Consider the following 60-residue polypeptide: Large ribosomal subunit protein uL30 (60 aa).

It belongs to the universal ribosomal protein uL30 family. As to quaternary structure, part of the 50S ribosomal subunit.

This Streptococcus uberis (strain ATCC BAA-854 / 0140J) protein is Large ribosomal subunit protein uL30.